Consider the following 146-residue polypeptide: Large ribosomal subunit protein uL15 (146 aa).

The segment at 1–51 (MQLNTIKPAEGSKKNRRHVGRGIGSGLGKTAGRGHKGQKSRSGGFHKVGFE) is disordered. A compositionally biased stretch (gly residues) spans 21–31 (RGIGSGLGKTA).

Belongs to the universal ribosomal protein uL15 family. Part of the 50S ribosomal subunit.

Its function is as follows. Binds to the 23S rRNA. This Polynucleobacter necessarius subsp. necessarius (strain STIR1) protein is Large ribosomal subunit protein uL15.